We begin with the raw amino-acid sequence, 212 residues long: Probable nicotinate-nucleotide adenylyltransferase (212 aa).

Belongs to the NadD family.

It carries out the reaction nicotinate beta-D-ribonucleotide + ATP + H(+) = deamido-NAD(+) + diphosphate. It functions in the pathway cofactor biosynthesis; NAD(+) biosynthesis; deamido-NAD(+) from nicotinate D-ribonucleotide: step 1/1. Catalyzes the reversible adenylation of nicotinate mononucleotide (NaMN) to nicotinic acid adenine dinucleotide (NaAD). This Mycobacterium avium (strain 104) protein is Probable nicotinate-nucleotide adenylyltransferase.